The following is a 185-amino-acid chain: MAGPRPRWRDQLLFMSIIVLVIVVICLMFYALLWEAGNLTDLPNLRIGFYNFCLWNEDTSTLQCHQFPELEALGVPRVGLGLARLGVYGSLVLTLFAPQPLLLAQCNSDERAWRLAVGFLAVSSVLLAGGLGLFLSYVWKWVRLSLPGPGFLALGSAQALLILLLIAMAVFPLRAERAESKLESC.

The Cytoplasmic portion of the chain corresponds to 1-11 (MAGPRPRWRDQ). Residues 12–32 (LLFMSIIVLVIVVICLMFYAL) form a helical membrane-spanning segment. Residues 33–77 (LWEAGNLTDLPNLRIGFYNFCLWNEDTSTLQCHQFPELEALGVPR) are Extracellular-facing. Residue N38 is glycosylated (N-linked (GlcNAc...) asparagine). Residues 78–98 (VGLGLARLGVYGSLVLTLFAP) traverse the membrane as a helical segment. Topologically, residues 99 to 114 (QPLLLAQCNSDERAWR) are cytoplasmic. A helical membrane pass occupies residues 115–135 (LAVGFLAVSSVLLAGGLGLFL). Residues 136 to 150 (SYVWKWVRLSLPGPG) are Extracellular-facing. The chain crosses the membrane as a helical span at residues 151-171 (FLALGSAQALLILLLIAMAVF). The Cytoplasmic segment spans residues 172 to 185 (PLRAERAESKLESC).

Expression significantly higher in gliomas than in normal brain tissues.

The protein resides in the membrane. The polypeptide is Transmembrane protein 140 (TMEM140) (Homo sapiens (Human)).